We begin with the raw amino-acid sequence, 508 residues long: Photosystem II CP47 reaction center protein (508 aa).

6 helical membrane-spanning segments follow: residues 21 to 36 (SVHI…WAGS), 101 to 115 (IVFS…IWHW), 140 to 156 (GIHL…FGAF), 203 to 218 (IAAG…FHLS), 237 to 252 (VLSS…AFVV), and 457 to 472 (TFAL…HGAR).

It belongs to the PsbB/PsbC family. PsbB subfamily. In terms of assembly, PSII is composed of 1 copy each of membrane proteins PsbA, PsbB, PsbC, PsbD, PsbE, PsbF, PsbH, PsbI, PsbJ, PsbK, PsbL, PsbM, PsbT, PsbX, PsbY, PsbZ, Psb30/Ycf12, at least 3 peripheral proteins of the oxygen-evolving complex and a large number of cofactors. It forms dimeric complexes. The cofactor is Binds multiple chlorophylls. PSII binds additional chlorophylls, carotenoids and specific lipids..

The protein localises to the plastid. Its subcellular location is the chloroplast thylakoid membrane. One of the components of the core complex of photosystem II (PSII). It binds chlorophyll and helps catalyze the primary light-induced photochemical processes of PSII. PSII is a light-driven water:plastoquinone oxidoreductase, using light energy to abstract electrons from H(2)O, generating O(2) and a proton gradient subsequently used for ATP formation. This chain is Photosystem II CP47 reaction center protein, found in Calycanthus floridus var. glaucus (Eastern sweetshrub).